The following is a 117-amino-acid chain: Large ribosomal subunit protein uL18 (117 aa).

The protein belongs to the universal ribosomal protein uL18 family. As to quaternary structure, part of the 50S ribosomal subunit; part of the 5S rRNA/L5/L18/L25 subcomplex. Contacts the 5S and 23S rRNAs.

Functionally, this is one of the proteins that bind and probably mediate the attachment of the 5S RNA into the large ribosomal subunit, where it forms part of the central protuberance. In Actinobacillus pleuropneumoniae serotype 5b (strain L20), this protein is Large ribosomal subunit protein uL18.